Consider the following 163-residue polypeptide: SsrA-binding protein (163 aa).

Basic and acidic residues predominate over residues 140–157; it reads RRGAIAERESKREMDRAL. The disordered stretch occupies residues 140-163; sequence RRGAIAERESKREMDRALARGRRR.

This sequence belongs to the SmpB family.

The protein resides in the cytoplasm. Functionally, required for rescue of stalled ribosomes mediated by trans-translation. Binds to transfer-messenger RNA (tmRNA), required for stable association of tmRNA with ribosomes. tmRNA and SmpB together mimic tRNA shape, replacing the anticodon stem-loop with SmpB. tmRNA is encoded by the ssrA gene; the 2 termini fold to resemble tRNA(Ala) and it encodes a 'tag peptide', a short internal open reading frame. During trans-translation Ala-aminoacylated tmRNA acts like a tRNA, entering the A-site of stalled ribosomes, displacing the stalled mRNA. The ribosome then switches to translate the ORF on the tmRNA; the nascent peptide is terminated with the 'tag peptide' encoded by the tmRNA and targeted for degradation. The ribosome is freed to recommence translation, which seems to be the essential function of trans-translation. This Anaeromyxobacter dehalogenans (strain 2CP-C) protein is SsrA-binding protein.